We begin with the raw amino-acid sequence, 4262 residues long: Polyketide synthase PksM (4262 aa).

The tract at residues 1–114 (MITEQLHISL…ADMHRKEQTA (114 aa)) is N-terminal hotdog fold 1. A PKS/mFAS DH 1 domain is found at 1-271 (MITEQLHISL…GKSVRNMSAF (271 aa)). His-18 functions as the Proton acceptor; for dehydratase activity 1 in the catalytic mechanism. Residues 129 to 271 (DRILNLDEIY…GKSVRNMSAF (143 aa)) are C-terminal hotdog fold 1. Asp-190 functions as the Proton donor; for dehydratase activity 1 in the catalytic mechanism. Positions 293–367 (PAFEMYLRQL…ELAAHLADHY (75 aa)) constitute a Carrier 1 domain. The residue at position 327 (Ser-327) is an O-(pantetheine 4'-phosphoryl)serine. The region spanning 393-831 (GEDIAIIGMA…GSNAHLILEE (439 aa)) is the Ketosynthase family 3 (KS3) 1 domain. Active-site for beta-ketoacyl synthase 1 activity residues include Cys-569, His-704, and His-744. The tract at residues 1009-1135 (HPLVHRNTSD…GRAVISDEAE (127 aa)) is N-terminal hotdog fold 2. In terms of domain architecture, PKS/mFAS DH 2 spans 1009–1301 (HPLVHRNTSD…MRALDGEQHS (293 aa)). His-1038 functions as the Proton acceptor; for dehydratase activity 2 in the catalytic mechanism. The tract at residues 1149–1301 (SLDTVTSEQC…MRALDGEQHS (153 aa)) is C-terminal hotdog fold 2. The active-site Proton donor; for dehydratase activity 2 is the Asp-1211. In terms of domain architecture, Carrier 2 spans 2188-2261 (EKSTEYMKKL…ALVEHFIKTK (74 aa)). Ser-2222 bears the O-(pantetheine 4'-phosphoryl)serine mark. Positions 2275-2291 (VQQHTPAESRTQSSQKP) are enriched in polar residues. Residues 2275 to 2313 (VQQHTPAESRTQSSQKPDQAAKRTRRFRKLGFSGEKETP) form a disordered region. Residues 2319 to 2734 (SRDVAVIGIS…GSNAHIILEE (416 aa)) form the Ketosynthase family 3 (KS3) 2 domain. Residues Cys-2476, His-2611, and His-2651 each act as for beta-ketoacyl synthase 2 activity in the active site. The stretch at 2750–2826 (ALIVLSAKNM…DFIENKADSL (77 aa)) forms a coiled coil. The Carrier 3 domain maps to 3409-3486 (SIEKRLEHDL…ELISFFLTDH (78 aa)). The residue at position 3446 (Ser-3446) is an O-(pantetheine 4'-phosphoryl)serine. One can recognise a Ketosynthase family 3 (KS3) 3 domain in the interval 3529–3944 (DEPIAIIGMS…GTNAHAVIEE (416 aa)). Active-site for beta-ketoacyl synthase 3 activity residues include Cys-3690, His-3825, and His-3865. The stretch at 4004–4033 (KAMEARLAIVANNQEQLVRKLKEYVEAMKN) forms a coiled coil. The 78-residue stretch at 4135–4212 (NGKTHIQKII…ALSDHLALKA (78 aa)) folds into the Carrier 4 domain. Ser-4172 carries the O-(pantetheine 4'-phosphoryl)serine modification.

Pantetheine 4'-phosphate is required as a cofactor.

It localises to the cytoplasm. It participates in antibiotic biosynthesis; bacillaene biosynthesis. Involved in some intermediate steps for the synthesis of the antibiotic polyketide bacillaene which is involved in secondary metabolism. The chain is Polyketide synthase PksM (pksM) from Bacillus subtilis (strain 168).